We begin with the raw amino-acid sequence, 279 residues long: Large ribosomal subunit protein uL2 (279 aa).

The interval 223-279 (MAMNPVDHPMGGGEGKSKSGGGRKHPKSPWGQLAKGLKTRNKKKASSKLIVRGRKSK) is disordered. The segment covering 232–242 (MGGGEGKSKSG) has biased composition (gly residues). Basic residues predominate over residues 259-279 (LKTRNKKKASSKLIVRGRKSK).

The protein belongs to the universal ribosomal protein uL2 family. In terms of assembly, part of the 50S ribosomal subunit. Forms a bridge to the 30S subunit in the 70S ribosome.

One of the primary rRNA binding proteins. Required for association of the 30S and 50S subunits to form the 70S ribosome, for tRNA binding and peptide bond formation. It has been suggested to have peptidyltransferase activity; this is somewhat controversial. Makes several contacts with the 16S rRNA in the 70S ribosome. In Prosthecochloris aestuarii (strain DSM 271 / SK 413), this protein is Large ribosomal subunit protein uL2.